The chain runs to 130 residues: Small ribosomal subunit protein uS8 (130 aa).

The protein belongs to the universal ribosomal protein uS8 family. Part of the 30S ribosomal subunit. Contacts proteins S5 and S12.

Its function is as follows. One of the primary rRNA binding proteins, it binds directly to 16S rRNA central domain where it helps coordinate assembly of the platform of the 30S subunit. This chain is Small ribosomal subunit protein uS8, found in Shewanella halifaxensis (strain HAW-EB4).